We begin with the raw amino-acid sequence, 258 residues long: Axonemal dynein light intermediate polypeptide 1 (258 aa).

Disordered stretches follow at residues 19–60 and 207–231; these read RNTE…CVPD and VNEQ…EEKK. Residues 34 to 48 show a composition bias toward low complexity; sequence SPQQPGPSGSAPQLP. A coiled-coil region spans residues 176–255; that stretch reads MRKALQAEQG…LKAQLEGIIA (80 aa).

It belongs to the inner dynein arm light chain family. Interacts with CFAP45. Interacts with DYNC1H1.

The protein resides in the cell projection. Its subcellular location is the cilium. It localises to the flagellum. The protein localises to the dynein axonemal particle. It is found in the cytoplasm. Involved in sperm flagellum assembly. The sequence is that of Axonemal dynein light intermediate polypeptide 1 (DNALI1) from Macaca fascicularis (Crab-eating macaque).